The primary structure comprises 271 residues: Auxin-responsive protein IAA5 (271 aa).

A disordered region spans residues 1–96; sequence MSPPLEPHDY…RHGASSGSVA (96 aa). Composition is skewed to low complexity over residues 14 to 33 and 40 to 50; these read SAAAASPTPSSSSCSSSPNP and PRLTLRLGLPG. An EAR-like (transcriptional repression) motif is present at residues 44-48; the sequence is LRLGL. One can recognise a PB1 domain in the interval 151–255; the sequence is PLYVKVSMDG…RKLKIMRGSD (105 aa).

This sequence belongs to the Aux/IAA family. As to quaternary structure, homodimers and heterodimers.

It is found in the nucleus. Aux/IAA proteins are short-lived transcriptional factors that function as repressors of early auxin response genes at low auxin concentrations. The chain is Auxin-responsive protein IAA5 (IAA5) from Oryza sativa subsp. japonica (Rice).